A 232-amino-acid chain; its full sequence is Large ribosomal subunit protein uL1 (232 aa).

This sequence belongs to the universal ribosomal protein uL1 family. As to quaternary structure, part of the 50S ribosomal subunit.

Functionally, binds directly to 23S rRNA. The L1 stalk is quite mobile in the ribosome, and is involved in E site tRNA release. In terms of biological role, protein L1 is also a translational repressor protein, it controls the translation of the L11 operon by binding to its mRNA. In Bordetella bronchiseptica (strain ATCC BAA-588 / NCTC 13252 / RB50) (Alcaligenes bronchisepticus), this protein is Large ribosomal subunit protein uL1.